A 699-amino-acid polypeptide reads, in one-letter code: 1,4-alpha-glucan-branching enzyme (699 aa).

Residues 59–60 (NE) and 88–90 (WAP) contribute to the substrate site. Trp104 serves as a coordination point for (1,4-alpha-D-glucosyl)n. 115 to 118 (DYGK) contributes to the substrate binding site. Residue Lys140 participates in (1,4-alpha-D-glucosyl)n binding. The residue at position 170 (Tyr170) is a Phosphotyrosine. 330 to 333 (EVLR) is a binding site for substrate. Asp354 acts as the Nucleophile in catalysis. Catalysis depends on Glu409, which acts as the Proton donor.

Belongs to the glycosyl hydrolase 13 family. GlgB subfamily. Monomer.

The enzyme catalyses Transfers a segment of a (1-&gt;4)-alpha-D-glucan chain to a primary hydroxy group in a similar glucan chain.. Its pathway is glycan biosynthesis; glycogen biosynthesis. In terms of biological role, glycogen-branching enzyme participates in the glycogen biosynthetic process along with glycogenin and glycogen synthase. Generates alpha-1,6-glucosidic branches from alpha-1,4-linked glucose chains, to increase solubility of the glycogen polymer. The protein is 1,4-alpha-glucan-branching enzyme (GBE1) of Felis catus (Cat).